Here is a 109-residue protein sequence, read N- to C-terminus: Elicitor peptide 2 (109 aa).

Positions 1–73 are excised as a propeptide; the sequence is MEKLDKRREE…KDDDVVVLLR (73 aa). Over residues 74 to 88 the composition is skewed to basic and acidic residues; that stretch reads DNKAKSKKRDKEKPS. The interval 74–109 is disordered; that stretch reads DNKAKSKKRDKEKPSSGRPGQTNSVPNAAIQVYKED.

It belongs to the brassicaceae elicitor peptide family.

Functionally, elicitor of plant defense. The sequence is that of Elicitor peptide 2 (PEP2) from Arabidopsis thaliana (Mouse-ear cress).